Consider the following 143-residue polypeptide: Small ribosomal subunit protein uS12 (143 aa).

Residues 1–19 show a composition bias toward basic residues; that stretch reads MGKPKGIRAARKLKTHRQA. The tract at residues 1 to 21 is disordered; that stretch reads MGKPKGIRAARKLKTHRQAQR. A Hydroxyproline modification is found at proline 62.

The protein belongs to the universal ribosomal protein uS12 family. As to quaternary structure, component of the 40S small ribosomal subunit.

Its subcellular location is the cytoplasm. The protein localises to the cytosol. The protein resides in the rough endoplasmic reticulum. The sequence is that of Small ribosomal subunit protein uS12 (rps-23) from Brugia malayi (Filarial nematode worm).